The chain runs to 388 residues: Gastricsin (388 aa).

Positions methionine 1–alanine 16 are cleaved as a signal peptide. Positions alanine 17–leucine 59 are cleaved as a propeptide — activation peptide. The 313-residue stretch at tyrosine 73–alanine 385 folds into the Peptidase A1 domain. Aspartate 91 is an active-site residue. Intrachain disulfides connect cysteine 104–cysteine 109 and cysteine 267–cysteine 271. Aspartate 276 is an active-site residue. Cysteine 310 and cysteine 343 are disulfide-bonded.

The protein belongs to the peptidase A1 family.

It is found in the secreted. The enzyme catalyses More restricted specificity than pepsin A, but shows preferential cleavage at Tyr-|-Xaa bonds. High activity on hemoglobin.. Functionally, hydrolyzes a variety of proteins. The polypeptide is Gastricsin (PGC) (Homo sapiens (Human)).